Consider the following 303-residue polypeptide: D-alanine--D-alanine ligase (303 aa).

Residues 102–298 (RILLAAAGLP…YPELCDWMVR (197 aa)) enclose the ATP-grasp domain. Residue 128–181 (PLPAPYVIKPVAEGSSVGVEIVRTGDNRRAEIARTWRFGKEALVESFIPGRELT) participates in ATP binding. Asp-251, Glu-265, and Asn-267 together coordinate Mg(2+).

Belongs to the D-alanine--D-alanine ligase family. It depends on Mg(2+) as a cofactor. Mn(2+) is required as a cofactor.

The protein resides in the cytoplasm. It catalyses the reaction 2 D-alanine + ATP = D-alanyl-D-alanine + ADP + phosphate + H(+). It functions in the pathway cell wall biogenesis; peptidoglycan biosynthesis. Its function is as follows. Cell wall formation. The protein is D-alanine--D-alanine ligase of Gluconobacter oxydans (strain 621H) (Gluconobacter suboxydans).